The following is a 463-amino-acid chain: tRNA-2-methylthio-N(6)-dimethylallyladenosine synthase (463 aa).

In terms of domain architecture, MTTase N-terminal spans 5-125 (RKLHIKSYGC…LPQLLAKAEQ (121 aa)). 6 residues coordinate [4Fe-4S] cluster: cysteine 14, cysteine 50, cysteine 88, cysteine 166, cysteine 170, and cysteine 173. Positions 152-384 (RARGISAFVT…QQLIDQQQSA (233 aa)) constitute a Radical SAM core domain. In terms of domain architecture, TRAM spans 387-449 (KAAIGRTVEV…RYSLLGELAS (63 aa)).

This sequence belongs to the methylthiotransferase family. MiaB subfamily. In terms of assembly, monomer. [4Fe-4S] cluster serves as cofactor.

The protein resides in the cytoplasm. The enzyme catalyses N(6)-dimethylallyladenosine(37) in tRNA + (sulfur carrier)-SH + AH2 + 2 S-adenosyl-L-methionine = 2-methylsulfanyl-N(6)-dimethylallyladenosine(37) in tRNA + (sulfur carrier)-H + 5'-deoxyadenosine + L-methionine + A + S-adenosyl-L-homocysteine + 2 H(+). Functionally, catalyzes the methylthiolation of N6-(dimethylallyl)adenosine (i(6)A), leading to the formation of 2-methylthio-N6-(dimethylallyl)adenosine (ms(2)i(6)A) at position 37 in tRNAs that read codons beginning with uridine. The polypeptide is tRNA-2-methylthio-N(6)-dimethylallyladenosine synthase (Rhodopseudomonas palustris (strain ATCC BAA-98 / CGA009)).